Consider the following 2474-residue polypeptide: Serine/threonine-protein kinase TOR2 (2474 aa).

The tract at residues 1–62 (MNKYINKYTT…NGPNDSGRVI (62 aa)) is disordered. Threonine 10 carries the phosphothreonine modification. Over residues 25-36 (HRTRKKLTHKSH) the composition is skewed to basic residues. Positions 43–56 (STTSNTDSNHNGPN) are enriched in polar residues. HEAT repeat units lie at residues 588–626 (YSLT…KDDI), 636–674 (HSVS…PQLA), 676–710 (PDNL…VNPA), 756–793 (PYID…VGGK), 797–835 (RYLK…SSGY), 841–879 (LDYP…LDPY), 917–955 (YYPT…NLGL), 1039–1076 (RFVP…FGPN), 1079–1116 (DYSH…NINL), 1118–1155 (EMSS…QLGT), and 1292–1331 (SYQE…DDKP). Residues 1338–1922 (TLGKYAQKCH…VYPLMVAIKS (585 aa)) enclose the FAT domain. The PI3K/PI4K catalytic domain maps to 2097 to 2421 (FEPVFSVISS…EHKNAIRNAR (325 aa)). Residues 2103–2109 (VISSKQR) are G-loop. The tract at residues 2276–2284 (GLGDRHPSN) is catalytic loop. The tract at residues 2296-2321 (HIDFGDCFEAAILREKFPEKVPFRLT) is activation loop. Residues 2442–2474 (NDLDVPEQVDKLIQQATSVENLCQHYIGWCPFW) enclose the FATC domain.

Belongs to the PI3/PI4-kinase family. The target of rapamycin complex 1 (TORC1) is composed of at least KOG1, LST8, TCO89 and either TOR1 (TORC1-A) or TOR2 (TORC1-B). TORC1 binds to and is inhibited by FKBP-rapamycin. Interacts with PIB2; following activation of PIB2 by glutamine. The target of rapamycin complex 2 (TORC2) is composed of at least AVO1, AVO2, BIT61, LST8, TOR2 and TSC11. TORC2 forms a homodimer. Contrary to TORC1, TORC2 does not bind to and is not sensitive to FKBP-rapamycin. Interacts with SLM1 and SLM2.

Its subcellular location is the cell membrane. The protein resides in the vacuole membrane. The enzyme catalyses L-seryl-[protein] + ATP = O-phospho-L-seryl-[protein] + ADP + H(+). The catalysed reaction is L-threonyl-[protein] + ATP = O-phospho-L-threonyl-[protein] + ADP + H(+). It carries out the reaction a 1,2-diacyl-sn-glycero-3-phospho-(1D-myo-inositol) + ATP = a 1,2-diacyl-sn-glycero-3-phospho-(1D-myo-inositol 4-phosphate) + ADP + H(+). Functionally, phosphatidylinositol 3-kinase homolog, component of both TORC1 and TORC2. TORC1 regulates multiple cellular processes to control cell growth in response to environmental signals. Nutrient limitation and environmental stress signals cause inactivation of TORC1. Active TORC1 positively controls ribosome biogenesis via control of rRNA, ribosomal protein and tRNA gene expression, and rRNA processing. TORC1 positively controls protein biosynthesis by regulation of mRNA stability, translation initiation factor activity, and high-affinity amino acid permeases that serve to provide amino acids for use by the translation machinery. TORC1 also promotes growth by sequestering a number of nutrient and general stress-responsive transcription factors in the cytoplasm. TORC1 negatively controls macroautophagy, a process to recycle surplus cytoplasmic mass under nutrient starvation conditions. TORC1 controls many of these processes via TIP41-TAP42-mediated inhibition of the type 2A-related phosphatases PP2A and SIT4. In nutrient-rich conditions, responsible for the phosphorylation of AGC S6 kinase (S6K) YPK3, activating YPK3 kinase activity and promoting phosphorylation of ribosomal protein S6. Phosphorylates kinase SCH9 at 6 amino acids in the C-terminus, activating SCH9 kinase activity to properly regulate ribosome biogenesis, translation initiation, and entry into stationary phase. TORC2 regulates cell cycle-dependent polarization of the actin-cytoskeleton, cell wall integrity, and receptor endocytosis. TORC2 controls polarity of the actin cytoskeleton, which is required for orienting the secretory pathway toward discrete growth sites, via the RHO1/PKC1/MAPK cell integrity pathway by activating the RHO1 guanine nucleotide exchange factor ROM2. TORC2 phosphorylates the AGC kinase YPK2, an upstream effector of the cell integrity pathway. TORC2 negatively regulates calcineurin-dependent stress signaling via phosphorylation of its effector SLM1-SLM2. The polypeptide is Serine/threonine-protein kinase TOR2 (TOR2) (Saccharomyces cerevisiae (strain ATCC 204508 / S288c) (Baker's yeast)).